Here is a 182-residue protein sequence, read N- to C-terminus: Helofensin-3 (182 aa).

An N-terminal signal peptide occupies residues 1–26; the sequence is MQMDWLFIAVISGIGLLSSGVPGTQG. Residues 27 to 64 form a C(6)C(4)C(9)C(6)CC 1; approximate repeat; that stretch reads AYTTEQCRALNGSCNFYACFPKNVIIGKCDWWGWSCCA. A C(6)C(4)C(9)C(6)CC 2; approximate repeat occupies 65–101; sequence RTPLERCTAKKGTCTKTGCTKTDTDHGPCDGGAQCCQ. The C(6)C(4)C(9)C(6)CC 3; approximate repeat unit spans residues 102-138; that stretch reads RDPVKYCKFHGNVCGRGKCPMDHIPIGECTPGYPCCK. Residues 139–176 form a C(6)C(4)C(9)C(6)CC 4; approximate repeat; it reads RDGPAYCKSKGGKCLNRCPQIVPTNVIGVCATGVPCCK.

This sequence belongs to the beta-defensin family. Helofensin subfamily. In terms of tissue distribution, expressed by the mandibular venom gland.

It is found in the secreted. Lethal toxin which possesses an inhibitory effect on direct electrical stimulation of the isolated hemi-diaphragm of mice. Neither hemorrhagic nor hemolytic activities are detected. Phospholipase A2 activity, proteolytic activity and arginine esterolytic activity are absent. The polypeptide is Helofensin-3 (Heloderma suspectum cinctum (Banded Gila monster)).